The primary structure comprises 512 residues: Alpha-1B-glycoprotein (512 aa).

Residues Met1 to Gly18 form the signal peptide. Ig-like V-type domains follow at residues Met22 to Lys126, Glu127 to Ser219, Gln220 to Leu312, Met313 to Asn415, and Gly416 to Gly512. N-linked (GlcNAc...) asparagine glycosylation is found at Asn44, Asn89, and Asn192. Intrachain disulfides connect Cys49–Cys96, Cys153–Cys195, Cys245–Cys292, Cys343–Cys392, and Cys441–Cys488. Residues Asn369, Asn381, Asn389, and Asn485 are each glycosylated (N-linked (GlcNAc...) asparagine).

As to quaternary structure, interacts with CRISP3. In terms of tissue distribution, expressed in the liver hepatocytes of male and female GH transgenic mice and in the liver of female, but not of male, non-transgenic mice.

It is found in the secreted. The protein is Alpha-1B-glycoprotein (A1bg) of Mus musculus (Mouse).